A 583-amino-acid chain; its full sequence is Estrogen receptor (583 aa).

The modulating stretch occupies residues 1–138 (MYPEESRGSG…GFEITKNTRF (138 aa)). 2 consecutive NR C4-type zinc fingers follow at residues 139 to 159 (CAVC…CEGC) and 175 to 199 (CPAT…LRKC). The segment at residues 139-204 (CAVCSDYASG…RLRKCYEVGM (66 aa)) is a DNA-binding region (nuclear receptor). Residues 205-265 (MKGGMRKDRG…PGGRSSLNNM (61 aa)) are hinge. Residues 220 to 263 (EKHGPAQRQTSQNLPTHKASPQDGRKRAMSSSSTSGPGGRSSLN) are disordered. The NR LBD domain maps to 266-501 (PPDQVLLLLQ…DLLLEMLDAH (236 aa)). The segment at 506–583 (PVKPSQSWSQ…GSHSDCTRIP (78 aa)) is disordered. The segment covering 539-551 (ASSAGSSSGPQGS) has biased composition (low complexity).

It belongs to the nuclear hormone receptor family. NR3 subfamily. In terms of assembly, binds DNA as a homodimer. Can form a heterodimer with ER-beta.

The protein resides in the nucleus. Functionally, the steroid hormones and their receptors are involved in the regulation of eukaryotic gene expression and affect cellular proliferation and differentiation in target tissues. The protein is Estrogen receptor (esr1) of Oreochromis aureus (Israeli tilapia).